We begin with the raw amino-acid sequence, 205 residues long: Probable GTP-binding protein EngB (205 aa).

An EngB-type G domain is found at 27–201 (TGIEIAFAGR…AAKLDFWFSP (175 aa)). Residues 35–42 (GRSNAGKS), 62–66 (GRTQL), 80–83 (DLPG), 147–150 (TKAD), and 180–182 (FSA) each bind GTP. Positions 42 and 64 each coordinate Mg(2+).

It belongs to the TRAFAC class TrmE-Era-EngA-EngB-Septin-like GTPase superfamily. EngB GTPase family. The cofactor is Mg(2+).

Functionally, necessary for normal cell division and for the maintenance of normal septation. This Haemophilus influenzae (strain PittEE) protein is Probable GTP-binding protein EngB.